The chain runs to 157 residues: Protein NrdI (157 aa).

Belongs to the NrdI family.

Its function is as follows. Probably involved in ribonucleotide reductase function. The polypeptide is Protein NrdI (Mycoplasma capricolum subsp. capricolum (strain California kid / ATCC 27343 / NCTC 10154)).